The chain runs to 643 residues: Transmembrane 9 superfamily member 4 (643 aa).

The N-terminal stretch at 1–23 (MAAAMIWWPRFLLLLCLTCKGST) is a signal peptide. The Extracellular portion of the chain corresponds to 24–282 (FYVPGVAPIN…TMSDVQIHWF (259 aa)). Residues 283–303 (SIINSVVVVFFLSGILSMIII) traverse the membrane as a helical segment. Residues 304–347 (RTLRKDIANYNKEDDIEDTMEESGWKLVHGDVFRPPQYPMILSS) lie on the Cytoplasmic side of the membrane. Phosphotyrosine is present on Tyr-313. Residues 348–368 (LLGSGIQLFCMILIVIFVAML) traverse the membrane as a helical segment. Topologically, residues 369-377 (GMLSPSSRG) are extracellular. Residues 378–398 (ALMTTACFLFMFMGVFGGFSA) traverse the membrane as a helical segment. At 399–417 (GRLYRTLKGHRWKKGAFCT) the chain is on the cytoplasmic side. A helical transmembrane segment spans residues 418 to 438 (ATLYPGVVFGICFVLNCFIWG). Topologically, residues 439-450 (KHSSGAVPFPTM) are extracellular. A helical membrane pass occupies residues 451 to 471 (VALLCMWFGISLPLVYLGYYF). Topologically, residues 472 to 502 (GFRKQPYDNPVRTNQIPRQIPEQRWYMNRFV) are cytoplasmic. A helical membrane pass occupies residues 503-523 (GILMAGILPFGAMFIELFFIF). The Extracellular segment spans residues 524–536 (SAIWENQFYYLFG). A helical transmembrane segment spans residues 537–557 (FLFLVFIILVVSCSQISIVMV). Topologically, residues 558 to 571 (YFQLCAEDYRWWWR) are cytoplasmic. The chain crosses the membrane as a helical span at residues 572-592 (NFLVSGGSAFYVLVYAIFYFV). Topologically, residues 593 to 599 (NKLDIVE) are extracellular. A helical membrane pass occupies residues 600–620 (FIPSLLYFGYTTLMVLSFWLL). Over 621 to 643 (TGTIGFYAAYMFVRKIYAAVKID) the chain is Cytoplasmic.

Belongs to the nonaspanin (TM9SF) (TC 9.A.2) family.

It is found in the membrane. The protein resides in the golgi apparatus. It localises to the early endosome. Associates with proteins harboring glycine-rich transmembrane domains and ensures their efficient localization to the cell surface. This chain is Transmembrane 9 superfamily member 4 (Tm9sf4), found in Mus musculus (Mouse).